Reading from the N-terminus, the 327-residue chain is Biotin synthase (327 aa).

The Radical SAM core domain occupies 49-282 (FNKEKIDLCS…NKVIRLCGGR (234 aa)). [4Fe-4S] cluster is bound by residues C67, C71, and C74. Positions 110, 142, 201, and 277 each coordinate [2Fe-2S] cluster.

The protein belongs to the radical SAM superfamily. Biotin synthase family. Homodimer. [4Fe-4S] cluster is required as a cofactor. Requires [2Fe-2S] cluster as cofactor.

The enzyme catalyses (4R,5S)-dethiobiotin + (sulfur carrier)-SH + 2 reduced [2Fe-2S]-[ferredoxin] + 2 S-adenosyl-L-methionine = (sulfur carrier)-H + biotin + 2 5'-deoxyadenosine + 2 L-methionine + 2 oxidized [2Fe-2S]-[ferredoxin]. It participates in cofactor biosynthesis; biotin biosynthesis; biotin from 7,8-diaminononanoate: step 2/2. In terms of biological role, catalyzes the conversion of dethiobiotin (DTB) to biotin by the insertion of a sulfur atom into dethiobiotin via a radical-based mechanism. The protein is Biotin synthase of Methanococcus maripaludis (strain DSM 14266 / JCM 13030 / NBRC 101832 / S2 / LL).